Here is a 476-residue protein sequence, read N- to C-terminus: uncharacterized protein (476 aa).

Helical transmembrane passes span 4–24 (FFSF…LFGA), 81–101 (ALAI…AAFI), 141–161 (WMGV…FSGV), 174–194 (FDFP…LAIT), 207–227 (FVPL…VMNI), 233–253 (VIWS…GAAG), 300–320 (MIGI…LILL), 351–371 (FVTL…YIYA), 391–411 (ICTF…MWQL), and 414–434 (IIMA…SPVV).

This sequence belongs to the alanine or glycine:cation symporter (AGCS) (TC 2.A.25) family.

It is found in the cell inner membrane. This is an uncharacterized protein from Escherichia coli (strain K12).